Reading from the N-terminus, the 217-residue chain is uncharacterized protein (217 aa).

The region spanning 2-216 (LCVKNVSLRL…AQWSENYNKL (215 aa)) is the ABC transporter domain. 34 to 41 (GPSGCGKS) contributes to the ATP binding site.

The protein belongs to the ABC transporter superfamily.

Its function is as follows. Probably part of a binding-protein-dependent transport system YnjCD. Probably responsible for energy coupling to the transport system. This is an uncharacterized protein from Escherichia coli (strain K12).